The primary structure comprises 454 residues: Toxin CfTX-A (454 aa).

The signal sequence occupies residues 1 to 18; sequence MDYAFIVFLVCFVSGTLG. Positions 19 to 25 are excised as a propeptide; sequence NRRRAKR. Residues 27 to 61 are a coiled coil; the sequence is VDEVTSGINQLVNQLNNVQQDTAAIKSALEELKTE.

It belongs to the jellyfish toxin family. Type II subfamily. In terms of assembly, oligomer. Post-translationally, contains 2 disulfide bonds. Nematocytes.

Its subcellular location is the secreted. It is found in the nematocyst. It localises to the target cell membrane. Functionally, the fraction containing this toxin and CfTX-A shows potent hemolytic activity. This fraction causes minor effects on the cardiovascular system of anesthetized rats (at 25 ug/kg), since it has no significant effects on heart rate but produces relatively small increases in mean arterial pressure. The polypeptide is Toxin CfTX-A (Chironex fleckeri (Australian box jellyfish)).